Reading from the N-terminus, the 132-residue chain is Interleukin-13 (132 aa).

An N-terminal signal peptide occupies residues 1 to 18 (MALLLTTVIALTCLGGFA). Residues N38, N49, N57, and N72 are each glycosylated (N-linked (GlcNAc...) asparagine). 2 cysteine pairs are disulfide-bonded: C48–C76 and C64–C90.

The protein belongs to the IL-4/IL-13 family. As to quaternary structure, interacts with IL13RA2.

The protein resides in the secreted. In terms of biological role, cytokine that plays important roles in allergic inflammation and immune response to parasite infection. Synergizes with IL2 in regulating interferon-gamma synthesis. Stimulates B-cell proliferation, and activation of eosinophils, basophils, and mast cells. Plays an important role in controlling IL33 activity by modulating the production of transmembrane and soluble forms of interleukin-1 receptor-like 1/IL1RL1. Displays the capacity to antagonize Th1-driven proinflammatory immune response and downregulates synthesis of many proinflammatory cytokines including IL1, IL6, IL10, IL12 and TNF-alpha through a mechanism that partially involves suppression of NF-kappa-B. Also functions on nonhematopoietic cells, including endothelial cells where it induces vascular cell adhesion protein 1/VCAM1, which is important in the recruitment of eosinophils. Exerts its biological effects through its receptors which comprises the IL4R chain and the IL13RA1 chain, to activate JAK1 and TYK2, leading to the activation of STAT6. Aside from IL13RA1, another receptor IL13RA2 acts as a high affinity decoy for IL13 and mediates internalization and depletion of extracellular IL13. This is Interleukin-13 (IL13) from Pan troglodytes (Chimpanzee).